Here is a 750-residue protein sequence, read N- to C-terminus: (13E)-labda-7,13-dien-15-ol synthase (750 aa).

Mg(2+) contacts are provided by Asp284, Asp286, Asp501, Asp505, Asn647, Thr651, and Glu655. The DXDD motif signature appears at 284-287; the sequence is DIDD. Residues 501 to 505 carry the DDXXD motif motif; it reads DDLAD.

The protein belongs to the terpene synthase family. The cofactor is Mg(2+).

It carries out the reaction geranylgeranyl diphosphate + H2O = (13E)-labda-7,13-dien-15-ol + diphosphate. It functions in the pathway secondary metabolite biosynthesis; terpenoid biosynthesis. In terms of biological role, bifunctional diterpene synthase that directly generates the endocyclic double bond, as well as the hydroxyl group: produces an endocyclic double bond isomer of copalyl diphosphate (CPP), and carries out subsequent replacement of the diphosphate by a hydroxyl group to form (13E)-labda-7,13-dien-15-ol. This chain is (13E)-labda-7,13-dien-15-ol synthase, found in Selaginella moellendorffii (Spikemoss).